The primary structure comprises 274 residues: Urease accessory protein UreD (274 aa).

This sequence belongs to the UreD family. As to quaternary structure, ureD, UreF and UreG form a complex that acts as a GTP-hydrolysis-dependent molecular chaperone, activating the urease apoprotein by helping to assemble the nickel containing metallocenter of UreC. The UreE protein probably delivers the nickel.

It localises to the cytoplasm. Functionally, required for maturation of urease via the functional incorporation of the urease nickel metallocenter. The protein is Urease accessory protein UreD of Enterobacter sp. (strain 638).